We begin with the raw amino-acid sequence, 790 residues long: Nitrogen permease reactivator protein (790 aa).

Positions methionine 1 to proline 68 are disordered. Over residues threonine 16 to aspartate 38 the composition is skewed to polar residues. Positions serine 46–serine 58 are enriched in low complexity. Residue serine 47 is modified to Phosphoserine; by autocatalysis. Phosphoserine is present on residues serine 85, serine 90, serine 100, serine 111, serine 116, serine 125, serine 137, and serine 141. A compositionally biased stretch (polar residues) spans arginine 151–proline 175. 2 disordered regions span residues arginine 151–serine 188 and leucine 234–phenylalanine 258. Low complexity predominate over residues asparagine 176–serine 188. Over residues serine 238–glutamine 248 the composition is skewed to polar residues. Positions serine 249–phenylalanine 258 are enriched in low complexity. Serine 257 is modified (phosphoserine; by autocatalysis). A phosphoserine mark is found at serine 259, serine 260, serine 288, serine 292, serine 317, serine 320, and serine 328. Residues asparagine 276–asparagine 289 are compositionally biased toward low complexity. The interval asparagine 276 to serine 357 is disordered. 3 stretches are compositionally biased toward polar residues: residues glycine 290–threonine 305, arginine 314–serine 339, and proline 346–serine 357. At tyrosine 334 the chain carries Phosphotyrosine. Residues serine 336, serine 353, and serine 356 each carry the phosphoserine modification. Serine 357 carries the phosphoserine; by autocatalysis modification. Residue serine 385 is modified to Phosphoserine. A Protein kinase domain is found at isoleucine 438–isoleucine 742. Residues leucine 444 to valine 452 and lysine 467 contribute to the ATP site. The active-site Proton acceptor is the aspartate 561. Disordered stretches follow at residues leucine 666–proline 704 and histidine 766–glutamine 790. A compositionally biased stretch (basic and acidic residues) spans aspartate 677–glutamate 688. The segment covering serine 689–asparagine 701 has biased composition (low complexity).

Belongs to the protein kinase superfamily. Ser/Thr protein kinase family. As to quaternary structure, interacts with TIP41. In terms of processing, hyperphosphorylated in nitrogen-rich growth medium. Nitrogen limitation (or rapamycin treatment) leads to substantial, though not complete dephosphorylation. Autophosphorylation plays only a minor role and seems not to be regulated by the quality of the nitrogen source.

The protein localises to the cytoplasm. It carries out the reaction L-seryl-[protein] + ATP = O-phospho-L-seryl-[protein] + ADP + H(+). It catalyses the reaction L-threonyl-[protein] + ATP = O-phospho-L-threonyl-[protein] + ADP + H(+). Its activity is regulated as follows. Dephosphorylation by SIT4 activates NPR1 kinase activity. In terms of biological role, nutrient-regulated protein kinase that promotes the activity of at least 6 distinct transport systems for nitrogenous nutrients under conditions of nitrogen catabolite derepression. Under poor nitrogen growth conditions, required for post-Golgi sorting of the general amino acid permease GAP1 and the three known ammonia permeases, MEP1/2/3, to the plasma membrane. Also contributes to the stability and the retention of GAP1 at the plasma membrane. Inversely, promotes the degradation of tryptophan permease TAT2 under the same conditions. Activity is regulated by the TOR signaling pathway via phosphatase SIT4. Although thought to be involved in regulation of GLN3-dependent transcription by nitrogen catabolite repression, this seems to be an indirect effect from the reduced uptake of the nitrogen-repressing compound. The protein is Nitrogen permease reactivator protein (NPR1) of Saccharomyces cerevisiae (strain ATCC 204508 / S288c) (Baker's yeast).